The chain runs to 121 residues: UPF0295 protein ABC1323 (121 aa).

The next 2 membrane-spanning stretches (helical) occupy residues 14-34 (TFALSLVFVGILIMYVGIFFK) and 41-61 (VIAMILGFLAVIASTVVYFFI).

The protein belongs to the UPF0295 family.

It is found in the cell membrane. The chain is UPF0295 protein ABC1323 from Shouchella clausii (strain KSM-K16) (Alkalihalobacillus clausii).